The sequence spans 564 residues: ATP-dependent RNA helicase DBP3 (564 aa).

The tract at residues Thr31–Ser125 is disordered. Residues Ala58–Asp73 show a composition bias toward basic and acidic residues. Positions Lys74 to Lys96 are enriched in basic residues. Residues Ser112–Ser125 show a composition bias toward low complexity. Positions Leu155–Ser181 match the Q motif motif. In terms of domain architecture, Helicase ATP-binding spans Trp184–Val356. Ala197–Thr204 is a binding site for ATP. A DEAD box motif is present at residues Asp303–Asp306. A Helicase C-terminal domain is found at Lys385–Gly534.

The protein belongs to the DEAD box helicase family. DDX5/DBP2 subfamily.

It localises to the nucleus. The protein localises to the nucleolus. The catalysed reaction is ATP + H2O = ADP + phosphate + H(+). Its function is as follows. ATP-dependent RNA helicase required for 60S ribosomal subunit synthesis. Involved in efficient pre-rRNA processing, predominantly at site A3, which is necessary for the normal formation of 25S and 5.8S rRNAs. This Candida albicans (strain SC5314 / ATCC MYA-2876) (Yeast) protein is ATP-dependent RNA helicase DBP3 (DBP3).